Reading from the N-terminus, the 464-residue chain is MAEPSVKKSKLTESDWISGLADDLLLQILSKVPTRESVFTSRMSKRWRNLWRHVPALDLDSSKFPHESDLEDFFDSFLQFDGNLKIERFKWIYNVEEHCDPEFVSRIDHVVKRGLKDLTILSKVNIEDDSVRMPVSLYSCATLVNLTLYSVVFDAPRAQLVSLPCLKTMHLEAVKFDGETILGTLISSCSFLDELTIITHDHDELGDVSVRSPSLRRFKLESMREDYDECEDPNVEVDTPGLEYMSITDYQSESFIIHNISPCAKVNIDVVFDAEDEDSVIHDFITAISTVRELTISARTLEMIHDYVESETELVPQFSNLFCLHASFSESSWEMFPTFLGCCPNLHSLFLEFDCLPEKEEINLSLVPHCFESSLEYVQLKVPITVSETSSKMELAIYFVRNCSVLKKLMLNESFGNVINKVRKIPKRSEGCKIAMPKPLHENVSHGSSLLPLICGFIPKILDQ.

The 48-residue stretch at 15–62 folds into the F-box domain; that stretch reads DWISGLADDLLLQILSKVPTRESVFTSRMSKRWRNLWRHVPALDLDSS. LRR repeat units lie at residues 96–122, 123–150, 152–178, 197–222, 223–249, and 273–298; these read EEHC…TILS, KVNI…TLYS, VFDA…KFDG, IITH…KLES, MRED…SITD, and DAED…TISA. Residues 359–413 form the FBD domain; it reads KEEINLSLVPHCFESSLEYVQLKVPITVSETSSKMELAIYFVRNCSVLKKLMLNE.

The polypeptide is F-box/FBD/LRR-repeat protein At1g80470 (Arabidopsis thaliana (Mouse-ear cress)).